Here is a 348-residue protein sequence, read N- to C-terminus: Mannonate dehydratase (348 aa).

It belongs to the mannonate dehydratase family. The cofactor is Fe(2+). Mn(2+) is required as a cofactor.

It catalyses the reaction D-mannonate = 2-dehydro-3-deoxy-D-gluconate + H2O. It functions in the pathway carbohydrate metabolism; pentose and glucuronate interconversion. Catalyzes the dehydration of D-mannonate. The protein is Mannonate dehydratase of Staphylococcus haemolyticus (strain JCSC1435).